A 553-amino-acid chain; its full sequence is Putative transport protein YidE (553 aa).

5 helical membrane passes run 4-24, 28-48, 65-85, 95-115, and 158-178; these read IALT…IGNI, GVGF…HFVD, FGLI…FFAS, LFAV…HKIF, and MSYA…MWLM. RCK C-terminal domains lie at 192 to 276 and 279 to 361; these read KHES…VIGK and DTSL…VVGN. A run of 5 helical transmembrane segments spans residues 371–391, 403–425, 437–457, 464–484, and 533–553; these read MLPV…PLFV, AGGP…LYWF, LGIV…FVNT, LSWI…VGLL, and LVMF…WGIG.

Belongs to the AAE transporter (TC 2.A.81) family. YidE subfamily.

It localises to the cell membrane. The chain is Putative transport protein YidE from Salmonella arizonae (strain ATCC BAA-731 / CDC346-86 / RSK2980).